The chain runs to 223 residues: Holliday junction branch migration complex subunit RuvA (223 aa).

Residues 1 to 64 (MIGRIAGVIL…EDLLQLFGFP (64 aa)) are domain I. The interval 65–143 (TLLEKEWHRL…AVMALGGALT (79 aa)) is domain II. The flexible linker stretch occupies residues 144–169 (VDPGPLPEVELVEAAVPAPVPAKAAP). The segment at 170-223 (SSAQATADALSALGNLGYAPSEAASAVAEAAAREPAAPTAALIRAALRLLAPKE) is domain III.

The protein belongs to the RuvA family. Homotetramer. Forms an RuvA(8)-RuvB(12)-Holliday junction (HJ) complex. HJ DNA is sandwiched between 2 RuvA tetramers; dsDNA enters through RuvA and exits via RuvB. An RuvB hexamer assembles on each DNA strand where it exits the tetramer. Each RuvB hexamer is contacted by two RuvA subunits (via domain III) on 2 adjacent RuvB subunits; this complex drives branch migration. In the full resolvosome a probable DNA-RuvA(4)-RuvB(12)-RuvC(2) complex forms which resolves the HJ.

It localises to the cytoplasm. In terms of biological role, the RuvA-RuvB-RuvC complex processes Holliday junction (HJ) DNA during genetic recombination and DNA repair, while the RuvA-RuvB complex plays an important role in the rescue of blocked DNA replication forks via replication fork reversal (RFR). RuvA specifically binds to HJ cruciform DNA, conferring on it an open structure. The RuvB hexamer acts as an ATP-dependent pump, pulling dsDNA into and through the RuvAB complex. HJ branch migration allows RuvC to scan DNA until it finds its consensus sequence, where it cleaves and resolves the cruciform DNA. The protein is Holliday junction branch migration complex subunit RuvA of Paracoccus denitrificans (strain Pd 1222).